A 339-amino-acid chain; its full sequence is 4-amino-5-hydroxymethyl-2-methylpyrimidine phosphate synthase (339 aa).

K62 is subject to N6-(pyridoxal phosphate)lysine. The active site involves H66. 115–118 (GEFG) contributes to the pyridoxal 5'-phosphate binding site. Residues 195 to 199 (CCCFC) carry the CCCFC; essential for catalytic activity, may be the site of iron coordination motif.

It belongs to the NMT1/THI5 family. As to quaternary structure, homodimer. Fe(3+) is required as a cofactor.

It catalyses the reaction N(6)-(pyridoxal phosphate)-L-lysyl-[4-amino-5-hydroxymethyl-2-methylpyrimidine phosphate synthase] + L-histidyl-[4-amino-5-hydroxymethyl-2-methylpyrimidine phosphate synthase] + 2 Fe(3+) + 4 H2O = L-lysyl-[4-amino-5-hydroxymethyl-2-methylpyrimidine phosphate synthase] + (2S)-2-amino-5-hydroxy-4-oxopentanoyl-[4-amino-5-hydroxymethyl-2-methylpyrimidine phosphate synthase] + 4-amino-2-methyl-5-(phosphooxymethyl)pyrimidine + 3-oxopropanoate + 2 Fe(2+) + 2 H(+). It participates in cofactor biosynthesis; thiamine diphosphate biosynthesis. In terms of biological role, responsible for the formation of the pyrimidine heterocycle in the thiamine biosynthesis pathway. Catalyzes the formation of hydroxymethylpyrimidine phosphate (HMP-P) from histidine and pyridoxal phosphate (PLP). The protein uses PLP and the active site histidine to form HMP-P, generating an inactive enzyme. The enzyme can only undergo a single turnover, which suggests it is a suicide enzyme. The protein is 4-amino-5-hydroxymethyl-2-methylpyrimidine phosphate synthase of Candida albicans (strain WO-1) (Yeast).